A 149-amino-acid polypeptide reads, in one-letter code: UPF0178 protein HEAR0259 (149 aa).

This sequence belongs to the UPF0178 family.

The chain is UPF0178 protein HEAR0259 from Herminiimonas arsenicoxydans.